Consider the following 78-residue polypeptide: Large ribosomal subunit protein bL28 (78 aa).

The disordered stretch occupies residues 1 to 20; the sequence is MSRVCQVTGKGPVTGNNISH.

The protein belongs to the bacterial ribosomal protein bL28 family.

In Azotobacter vinelandii (strain DJ / ATCC BAA-1303), this protein is Large ribosomal subunit protein bL28.